Reading from the N-terminus, the 443-residue chain is MAQFYSPNRRVTTKQTLTVTVNSLDPFGQGVAHHQGKAIFIPGALPGEQAEIELTEQKRQYSRGKLKRLLNRCNERVVPACPHFGICGGCQQQHANSQLQQMSKADSLQRLIMREAGACPQLDPVICGSEYGYRRRARLGLLYQPKQHRLQMGFRQTESHDLVCIKHCPVLRPELERLLLPLYQCLSGLQAVRRLGHVELVLADNGPLMVLRHLDTLKEVDRAALIDFAKREQVAVYLAGDSDNVEKLIGEEPYYQIEGLRLAFHPRDFIQVNDTVNQQMVAQAIAWLDVQPDERVLDLFCGMGNFTLPLAKLAREVVGVEGVAALVANGQYNALNNALPNVSFFHENLESDISRQPWATQGFDKVLLDPARAGAAGVMSHIVKLAPKRVVYVSCNPTTLARDSQVLLAAGYRLAQVRMLDMFPHTGHLESMALFMQEPGVAK.

The region spanning 10 to 68 (RVTTKQTLTVTVNSLDPFGQGVAHHQGKAIFIPGALPGEQAEIELTEQKRQYSRGKLKR) is the TRAM domain. [4Fe-4S] cluster contacts are provided by cysteine 81, cysteine 87, cysteine 90, and cysteine 168. S-adenosyl-L-methionine contacts are provided by glutamine 271, phenylalanine 300, asparagine 305, glutamate 321, asparagine 348, and aspartate 369. The active-site Nucleophile is cysteine 395.

This sequence belongs to the class I-like SAM-binding methyltransferase superfamily. RNA M5U methyltransferase family. RlmD subfamily.

It catalyses the reaction uridine(1939) in 23S rRNA + S-adenosyl-L-methionine = 5-methyluridine(1939) in 23S rRNA + S-adenosyl-L-homocysteine + H(+). Catalyzes the formation of 5-methyl-uridine at position 1939 (m5U1939) in 23S rRNA. The chain is 23S rRNA (uracil(1939)-C(5))-methyltransferase RlmD from Yersinia enterocolitica serotype O:8 / biotype 1B (strain NCTC 13174 / 8081).